A 304-amino-acid chain; its full sequence is Ribosomal RNA large subunit methyltransferase F (304 aa).

Belongs to the methyltransferase superfamily. METTL16/RlmF family.

It is found in the cytoplasm. It catalyses the reaction adenosine(1618) in 23S rRNA + S-adenosyl-L-methionine = N(6)-methyladenosine(1618) in 23S rRNA + S-adenosyl-L-homocysteine + H(+). In terms of biological role, specifically methylates the adenine in position 1618 of 23S rRNA. The sequence is that of Ribosomal RNA large subunit methyltransferase F from Klebsiella pneumoniae (strain 342).